The following is a 604-amino-acid chain: uncharacterized protein (604 aa).

An ABC transmembrane type-1 domain is found at 45-329 (LPLSFLTVLI…LGQVYNQLLM (285 aa)). 6 consecutive transmembrane segments (helical) span residues 49–69 (FLTV…IGVY), 82–102 (LLIQ…AANV), 162–182 (VINL…LFTL), 184–204 (PELT…STSL), 273–293 (LVEM…ATLI), and 297–317 (TITI…WEPI). The region spanning 363-597 (ISFEEVEFSY…GGIYAGLVKA (235 aa)) is the ABC transporter domain. 396-403 (GHTGSGKT) contacts ATP.

It belongs to the ABC transporter superfamily.

The protein localises to the cell membrane. This is an uncharacterized protein from Bacillus subtilis (strain 168).